The chain runs to 105 residues: Small ribosomal subunit protein uS17 (105 aa).

This sequence belongs to the universal ribosomal protein uS17 family. As to quaternary structure, part of the 30S ribosomal subunit.

Functionally, one of the primary rRNA binding proteins, it binds specifically to the 5'-end of 16S ribosomal RNA. The protein is Small ribosomal subunit protein uS17 of Thermus aquaticus.